A 122-amino-acid polypeptide reads, in one-letter code: Large ribosomal subunit protein uL14 (122 aa).

This sequence belongs to the universal ribosomal protein uL14 family. In terms of assembly, part of the 50S ribosomal subunit. Forms a cluster with proteins L3 and L19. In the 70S ribosome, L14 and L19 interact and together make contacts with the 16S rRNA in bridges B5 and B8.

In terms of biological role, binds to 23S rRNA. Forms part of two intersubunit bridges in the 70S ribosome. The sequence is that of Large ribosomal subunit protein uL14 from Clostridium perfringens (strain ATCC 13124 / DSM 756 / JCM 1290 / NCIMB 6125 / NCTC 8237 / Type A).